The primary structure comprises 213 residues: Uridine kinase (213 aa).

13-20 provides a ligand contact to ATP; the sequence is GASASGKS.

Belongs to the uridine kinase family.

It localises to the cytoplasm. The catalysed reaction is uridine + ATP = UMP + ADP + H(+). The enzyme catalyses cytidine + ATP = CMP + ADP + H(+). It functions in the pathway pyrimidine metabolism; CTP biosynthesis via salvage pathway; CTP from cytidine: step 1/3. Its pathway is pyrimidine metabolism; UMP biosynthesis via salvage pathway; UMP from uridine: step 1/1. The protein is Uridine kinase of Haemophilus influenzae (strain PittGG).